Reading from the N-terminus, the 158-residue chain is Transcription elongation factor GreA (158 aa).

Residues 2-70 (ENQKQYPMTQ…IEQDIQRIEH (69 aa)) adopt a coiled-coil conformation.

Belongs to the GreA/GreB family.

Its function is as follows. Necessary for efficient RNA polymerase transcription elongation past template-encoded arresting sites. The arresting sites in DNA have the property of trapping a certain fraction of elongating RNA polymerases that pass through, resulting in locked ternary complexes. Cleavage of the nascent transcript by cleavage factors such as GreA or GreB allows the resumption of elongation from the new 3'terminus. GreA releases sequences of 2 to 3 nucleotides. The protein is Transcription elongation factor GreA of Staphylococcus epidermidis (strain ATCC 35984 / DSM 28319 / BCRC 17069 / CCUG 31568 / BM 3577 / RP62A).